We begin with the raw amino-acid sequence, 192 residues long: MIVIVDYGLGNISNVKRAIEHLGYEVVVSNTSKIIDQAETIILPGVGHFKDAMSEIKRLNLNAILAKNTDKKMIGICLGMQLMYEHSDEGDASGLGFIPGNISRIQTEYPVPHLGWNNLVSKHPMLNQDVYFVHSYQAPMSENVIAYAQYGADIPAIVQFNNYIGIQFHPEKSGTYGLQILRQAIQGGFIND.

One can recognise a Glutamine amidotransferase type-1 domain in the interval Met-1–Asp-192. Cys-77 acts as the Nucleophile in catalysis. Residues His-169 and Glu-171 contribute to the active site.

As to quaternary structure, heterodimer of HisH and HisF.

It localises to the cytoplasm. The enzyme catalyses 5-[(5-phospho-1-deoxy-D-ribulos-1-ylimino)methylamino]-1-(5-phospho-beta-D-ribosyl)imidazole-4-carboxamide + L-glutamine = D-erythro-1-(imidazol-4-yl)glycerol 3-phosphate + 5-amino-1-(5-phospho-beta-D-ribosyl)imidazole-4-carboxamide + L-glutamate + H(+). The catalysed reaction is L-glutamine + H2O = L-glutamate + NH4(+). Its pathway is amino-acid biosynthesis; L-histidine biosynthesis; L-histidine from 5-phospho-alpha-D-ribose 1-diphosphate: step 5/9. Its function is as follows. IGPS catalyzes the conversion of PRFAR and glutamine to IGP, AICAR and glutamate. The HisH subunit catalyzes the hydrolysis of glutamine to glutamate and ammonia as part of the synthesis of IGP and AICAR. The resulting ammonia molecule is channeled to the active site of HisF. This chain is Imidazole glycerol phosphate synthase subunit HisH, found in Staphylococcus aureus (strain COL).